A 259-amino-acid polypeptide reads, in one-letter code: Interleukin-1 receptor-associated kinase 1-binding protein 1 (259 aa).

A phosphoserine mark is found at Ser55, Ser61, Ser63, and Ser234. Position 236 is a phosphothreonine (Thr236). A required for nuclear localization (NLS) region spans residues 239–259; that stretch reads AASKVFITFEVKGKEKKKKHL. Ser241 bears the Phosphoserine mark. Thr246 is modified (phosphothreonine).

This sequence belongs to the IRAK1BP1 family. Interacts with IRAK1 and RELA. Interacts with HSPA8 and HSPA1. May interact with Listeria monocytogenes actA. Phosphorylation at Ser-55, Ser-61 and/or Ser-63 is required for full activity. Phosphorylated on at least one of Ser-234, Thr-236, Ser-241 and Thr-246 upon TNF-alpha activation, which favors nuclear translocation. In terms of tissue distribution, expressed in testis, brain, kidney, liver and heart.

The protein localises to the cytoplasm. Its subcellular location is the nucleus. In terms of biological role, component of the IRAK1-dependent TNFRSF1A signaling pathway that leads to NF-kappa-B activation and is required for cell survival. Acts by enhancing RELA transcriptional activity. In Mus musculus (Mouse), this protein is Interleukin-1 receptor-associated kinase 1-binding protein 1 (Irak1bp1).